The primary structure comprises 168 residues: Crossover junction endodeoxyribonuclease RuvC (168 aa).

Residues aspartate 10, glutamate 70, and aspartate 143 contribute to the active site. Aspartate 10, glutamate 70, and aspartate 143 together coordinate Mg(2+).

Belongs to the RuvC family. In terms of assembly, homodimer which binds Holliday junction (HJ) DNA. The HJ becomes 2-fold symmetrical on binding to RuvC with unstacked arms; it has a different conformation from HJ DNA in complex with RuvA. In the full resolvosome a probable DNA-RuvA(4)-RuvB(12)-RuvC(2) complex forms which resolves the HJ. Requires Mg(2+) as cofactor.

Its subcellular location is the cytoplasm. The enzyme catalyses Endonucleolytic cleavage at a junction such as a reciprocal single-stranded crossover between two homologous DNA duplexes (Holliday junction).. Its function is as follows. The RuvA-RuvB-RuvC complex processes Holliday junction (HJ) DNA during genetic recombination and DNA repair. Endonuclease that resolves HJ intermediates. Cleaves cruciform DNA by making single-stranded nicks across the HJ at symmetrical positions within the homologous arms, yielding a 5'-phosphate and a 3'-hydroxyl group; requires a central core of homology in the junction. The consensus cleavage sequence is 5'-(A/T)TT(C/G)-3'. Cleavage occurs on the 3'-side of the TT dinucleotide at the point of strand exchange. HJ branch migration catalyzed by RuvA-RuvB allows RuvC to scan DNA until it finds its consensus sequence, where it cleaves and resolves the cruciform DNA. This chain is Crossover junction endodeoxyribonuclease RuvC, found in Thermotoga maritima (strain ATCC 43589 / DSM 3109 / JCM 10099 / NBRC 100826 / MSB8).